Consider the following 264-residue polypeptide: 3-methyl-2-oxobutanoate hydroxymethyltransferase (264 aa).

The Mg(2+) site is built by D45 and D84. Residues 45 to 46, D84, and K112 each bind 3-methyl-2-oxobutanoate; that span reads DS. A Mg(2+)-binding site is contributed by E114. Catalysis depends on E181, which acts as the Proton acceptor.

It belongs to the PanB family. Homodecamer; pentamer of dimers. It depends on Mg(2+) as a cofactor.

It is found in the cytoplasm. The enzyme catalyses 3-methyl-2-oxobutanoate + (6R)-5,10-methylene-5,6,7,8-tetrahydrofolate + H2O = 2-dehydropantoate + (6S)-5,6,7,8-tetrahydrofolate. Its pathway is cofactor biosynthesis; (R)-pantothenate biosynthesis; (R)-pantoate from 3-methyl-2-oxobutanoate: step 1/2. Catalyzes the reversible reaction in which hydroxymethyl group from 5,10-methylenetetrahydrofolate is transferred onto alpha-ketoisovalerate to form ketopantoate. The polypeptide is 3-methyl-2-oxobutanoate hydroxymethyltransferase (Shewanella sp. (strain ANA-3)).